The primary structure comprises 606 residues: MLLNACCKKNLWPRNGSTIFRRFALKLRPYQEECLSACLNAFDEGKRRIAVSLATGSGKTALFPHFIKYAPTLRPNSEQCLILVHRKELALQALKHCRESLPNKSIEIDMGNQCASGLADVTVASVFSLKNERLLKYNPLNFKLLIFDEVHHMASPSYLRILEHFGAESEKSKVNVIGLTATLFRADGKGLACGLDEIVYHRHFVDMIKDNWLVEPKVINIKWSTDLVLADSSSFLDQEKLKKEAQSEKAIFEIPRAWLEHASNRSSTLVFCINVEHSLKVCNAFRKLGIDARALFGETNDSERETLIQDFRKKKFPVLVNCMVLTEGTDIPNIDCLMIARPTSSPNLLTQMIGRGLRLHEGKRDCLILDFCDSLRRVSLHVDPTLAGLSPDEVENFYNKSKNSLANPDYDPKIYGLQSVLWYSKLRKLIEMMDNIKNKDRSIFNLSTNAWVAVGMGRYVLSFLQKVLIIDTNFEDGTHKISEYTKEKLGTRVYNRKRIVSDRIPSLKFAIRAAETYISNLKTPRSLISRKAVWRMRPASVRQINFLKKSNLKLDEKLLTAGVAADMITKVIYGGKGRQVRTDKLQSYLKHDANLKRITTLKELKG.

One can recognise a Helicase ATP-binding domain in the interval 40–201 (NAFDEGKRRI…ACGLDEIVYH (162 aa)). ATP is bound at residue 53–60 (LATGSGKT). Residues 148 to 151 (DEVH) carry the DEAH box motif. A Helicase C-terminal domain is found at 246-398 (QSEKAIFEIP…LSPDEVENFY (153 aa)).

It belongs to the helicase family. IRC3 subfamily.

The protein resides in the mitochondrion. This chain is Putative mitochondrial ATP-dependent helicase irc3 (irc3), found in Schizosaccharomyces pombe (strain 972 / ATCC 24843) (Fission yeast).